Here is a 115-residue protein sequence, read N- to C-terminus: Protein translation factor SUI1 homolog (115 aa).

Belongs to the SUI1 family. Expressed in all tissues examined.

Its function is as follows. Probably involved in translation. The protein is Protein translation factor SUI1 homolog (GOS2) of Oryza sativa subsp. indica (Rice).